Reading from the N-terminus, the 457-residue chain is F-box/LRR-repeat protein At3g62440 (457 aa).

The 49-residue stretch at 1-49 (MDRISNLPDEIICHIGSFLSAREAAFTTVLSKRWHNLFTIVPDLHFDSS) folds into the F-box domain. LRR repeat units follow at residues 53-79 (GESL…SLKW), 147-174 (LSLG…SLYH), 177-202 (FYEF…TVCG), 229-254 (WDAF…YYSD), 283-310 (WGKG…NLYT), and 337-362 (LSNF…NIDG).

The polypeptide is F-box/LRR-repeat protein At3g62440 (Arabidopsis thaliana (Mouse-ear cress)).